We begin with the raw amino-acid sequence, 734 residues long: Photosystem I P700 chlorophyll a apoprotein A2 (734 aa).

A run of 8 helical transmembrane segments spans residues 46–69 (IFAS…FHVA), 135–158 (LYSG…LHLQ), 175–199 (LNHH…HVAI), 273–291 (IAHH…GHMY), 330–353 (LHFQ…QHMY), 369–395 (AALY…IFFV), 417–439 (AIIS…LYVH), and 517–535 (FLVH…LILV). Residues C559 and C568 each contribute to the [4Fe-4S] cluster site. The next 2 membrane-spanning stretches (helical) occupy residues 575-596 (AFYL…YWHW) and 643-665 (LSVW…MFLI). 3 residues coordinate chlorophyll a: H654, M662, and Y670. Position 671 (W671) interacts with phylloquinone. Residues 707 to 727 (LVGLVHFTVGYIFTYAAFVIA) form a helical membrane-spanning segment.

Belongs to the PsaA/PsaB family. In terms of assembly, the PsaA/B heterodimer binds the P700 chlorophyll special pair and subsequent electron acceptors. PSI consists of a core antenna complex that captures photons, and an electron transfer chain that converts photonic excitation into a charge separation. The eukaryotic PSI reaction center is composed of at least 11 subunits. It depends on P700 is a chlorophyll a/chlorophyll a' dimer, A0 is one or more chlorophyll a, A1 is one or both phylloquinones and FX is a shared 4Fe-4S iron-sulfur center. as a cofactor.

It is found in the plastid. The protein resides in the chloroplast thylakoid membrane. The catalysed reaction is reduced [plastocyanin] + hnu + oxidized [2Fe-2S]-[ferredoxin] = oxidized [plastocyanin] + reduced [2Fe-2S]-[ferredoxin]. Functionally, psaA and PsaB bind P700, the primary electron donor of photosystem I (PSI), as well as the electron acceptors A0, A1 and FX. PSI is a plastocyanin/cytochrome c6-ferredoxin oxidoreductase, converting photonic excitation into a charge separation, which transfers an electron from the donor P700 chlorophyll pair to the spectroscopically characterized acceptors A0, A1, FX, FA and FB in turn. Oxidized P700 is reduced on the lumenal side of the thylakoid membrane by plastocyanin or cytochrome c6. The sequence is that of Photosystem I P700 chlorophyll a apoprotein A2 from Guillardia theta (Cryptophyte).